The primary structure comprises 1319 residues: MFPMQFTNSAYRQMEPMFAPGPRGQVQPYRPRTKRRQEPQVGNAAIAALANQMSALQLQVAGLAGQARVDRRGPRRVQKSKQKKKNPSNGEKPKEKKKKQKQQEKKGSGGVIKKPRNRPGKEVRISVKRARQSTFPVYHDGAISGYAVLIGSRVFKPAHVKGKIDHPELADIKFQVAEDMDLEAAAYPKSMRDQAAEPATMMDGVYNWEYGTIRVEDNVVIDASGRGKPGDSGRAITDNSGKVVGIVLGGGPDGRRTRLSVIGFDKKMKAREIAYSEAIPWTRAPALLLLPMVIACTYNSNTFDCSKPSCQDCCITAEPKKAMAMLKDNLNDPNYWDLLIAVTTCNSARKKRAVSTSPAAVYDTQILAAHAAASPYRAYCPDCDGTACISPIAIDEVVSSGSDHVLRIRVGSQSGVTAKGGAAGETSLRYLGRDGKVHAADNTRLVVRTTAKCDVLQATGHYILASCPEGQSITVAATLDGTRHQCTTVFEHQVTEKFTRERSKGHHLSDLTKKCTRFSTTPKKSAPYLVDVYDALPISVEISTVVTCNDNQCTVKVPPGTTVKFDKKCKSAAQATVTFTSDSQTFTCEEPVLTAASITQGKPHLRSSMLPSGGKEVKARIPFPFPPETATCRVSVAPLPSITYEESDVLLAGTAKYPVLLTTRNLGFHSNATSEWIQGKYLRRIPVTPQGIELTWGNNAPLHFWSSVRYASGDADAYPWELLVHHTKHHPEYAWAFVGVACGLLVIAVCMFACACNRVRYSLVANTFNPNPPPLTALTAALCCIPGARADQPYLDIIAYLWTNSKVAFGLQCAAPVACVLIVTYALRHCRLCCKSFLGVRGWSALLVILAYVQSCKSYEHTVVVPMDPRAPSYEAVINRNGYDPLKLTIAVNFTVISPTTALEYWTCASVPIVEPPHVGCCTSVSCPSDLSTLHAFTGKAVSDVHCDVHTNVYPLLWGAAHCFCSTENTQVSAVAATVSEFCAQDSERAEAFSVHSSSVTAEVLVTLGEVVTAVHVYVDGVTSARGTDLKIVAGPITTDYSPFDRKVVRIGEEVYNYDWPPYGAGRPGTFGDIQARSTNYVKPNDLYGDIGIEVLQPTNDHVHVAYTYTTSGLLRWLQDAPKPLSVTAPHGCKISANPLLALDCGVGAVPMSINIPDAKFTRKLKDPKPSALKCVVDSCEYGVDYGGAATITYEGHEAGKCGIHSLTPGVPLRTSVVEVVAGANTVKTTFSSPTPEVTLEVEICSAMVTCASECTPPKEHVVATRPRHGSDTGGYISGPAMRWAGGIVGTLAVLFLILAVTYCVVKKCRSKRIRIVKS.

Over 1-733 (MFPMQFTNSA…VHHTKHHPEY (733 aa)) the chain is Extracellular. A host transcription inhibition region spans residues 48 to 81 (ALANQMSALQLQVAGLAGQARVDRRGPRRVQKSK). Residues 74 to 119 (PRRVQKSKQKKKNPSNGEKPKEKKKKQKQQEKKGSGGVIKKPRNRP) carry the Nuclear localization signal motif. The tract at residues 101–134 (KQQEKKGSGGVIKKPRNRPGKEVRISVKRARQST) is binding to the viral RNA. Residues 119–133 (PGKEVRISVKRARQS) are ribosome-binding. The region spanning 133 to 281 (STFPVYHDGA…EIAYSEAIPW (149 aa)) is the Peptidase S3 domain. The Charge relay system role is filled by His159. The short motif at 164–174 (IDHPELADIKF) is the Nuclear export signal element. The active-site Charge relay system is the Asp181. The dimerization of the capsid protein stretch occupies residues 202 to 212 (MDGVYNWEYGT). The Charge relay system role is filled by Ser232. Positions 238 to 242 (DNSGK) are dimerization of the capsid protein. Residues 282 to 301 (TRAPALLLLPMVIACTYNSN) are functions as an uncleaved signal peptide for the precursor of protein E3/E2. 5 disulfide bridges follow: Cys296-Cys305, Cys380-Cys486, Cys383-Cys388, Cys453-Cys467, and Cys515-Cys632. The chain crosses the membrane as a helical span at residues 734-754 (AWAFVGVACGLLVIAVCMFAC). Residues 755 to 791 (ACNRVRYSLVANTFNPNPPPLTALTAALCCIPGARAD) are Cytoplasmic-facing. Residues 759–783 (VRYSLVANTFNPNPPPLTALTAALC) are transient transmembrane before p62-6K protein processing. S-palmitoyl cysteine; by host attachment occurs at residues Cys783 and Cys784. The Extracellular portion of the chain corresponds to 792–806 (QPYLDIIAYLWTNSK). A helical membrane pass occupies residues 807–827 (VAFGLQCAAPVACVLIVTYAL). Residues 828-832 (RHCRL) lie on the Cytoplasmic side of the membrane. Residues 833-853 (CCKSFLGVRGWSALLVILAYV) form a helical membrane-spanning segment. Residues 854–1285 (QSCKSYEHTV…YISGPAMRWA (432 aa)) are Extracellular-facing. Cystine bridges form between Cys908/Cys983, Cys921/Cys963, Cys922/Cys965, Cys927/Cys947, Cys1133/Cys1145, Cys1175/Cys1251, Cys1180/Cys1255, and Cys1202/Cys1245. The segment at 953–970 (VYPLLWGAAHCFCSTENT) is E1 fusion peptide loop. A helical membrane pass occupies residues 1286–1306 (GGIVGTLAVLFLILAVTYCVV). The Cytoplasmic segment spans residues 1307-1319 (KKCRSKRIRIVKS). Cys1309 carries S-stearoyl cysteine; by host lipidation.

As to quaternary structure, homodimer. Homomultimer. Interacts with host karyopherin KPNA4; this interaction allows the nuclear import of the viral capsid protein. Interacts with spike glycoprotein E2. Interacts with host IRAK1; the interaction leads to inhibition of IRAK1-dependent signaling. The precursor of protein E3/E2 and E1 form a heterodimer shortly after synthesis. In terms of assembly, interacts with spike glycoprotein E2. The precursor of protein E3/E2 and E1 form a heterodimer shortly after synthesis. Processing of the precursor of protein E3/E2 into E2 and E3 results in a heterodimer of the spike glycoproteins E2 and E1. Spike at virion surface are constituted of three E2-E1 heterodimers. After target cell attachment and endocytosis, E1 change conformation to form homotrimers. Interacts with 6K protein. As to quaternary structure, interacts with spike glycoprotein E1. Processing of the precursor of protein E3/E2 into E2 and E3 results in a heterodimer of the spike glycoproteins E2 and E1. Spike at virion surface are constituted of a trimer of E2-E1 heterodimers. Interacts with 6K protein. Oligomer. Interacts with spike glycoprotein E1. Interacts with spike glycoprotein E2. Structural polyprotein: Specific enzymatic cleavages in vivo yield mature proteins. Capsid protein is auto-cleaved during polyprotein translation, unmasking a signal peptide at the N-terminus of the precursor of E3/E2. The remaining polyprotein is then targeted to the host endoplasmic reticulum, where host signal peptidase cleaves it into pE2, 6K and E1 proteins. pE2 is further processed to mature E3 and E2 by host furin in trans-Golgi vesicle. Post-translationally, palmitoylated via thioester bonds. These palmitoylations may induce disruption of the C-terminus transmembrane. This would result in the reorientation of E2 C-terminus from lumenal to cytoplasmic side. In terms of processing, N-glycosylated. Palmitoylated via thioester bonds.

It is found in the virion. Its subcellular location is the host cytoplasm. The protein resides in the host cell membrane. The protein localises to the host nucleus. It localises to the virion membrane. It is found in the host Golgi apparatus. Its subcellular location is the host trans-Golgi network. The protein resides in the host endoplasmic reticulum. The catalysed reaction is Autocatalytic release of the core protein from the N-terminus of the togavirus structural polyprotein by hydrolysis of a -Trp-|-Ser- bond.. Functionally, forms an icosahedral capsid with a T=4 symmetry composed of 240 copies of the capsid protein surrounded by a lipid membrane through which penetrate 80 spikes composed of trimers of E1-E2 heterodimers. The capsid protein binds to the viral RNA genome at a site adjacent to a ribosome binding site for viral genome translation following genome release. Possesses a protease activity that results in its autocatalytic cleavage from the nascent structural protein. Following its self-cleavage, the capsid protein transiently associates with ribosomes, and within several minutes the protein binds to viral RNA and rapidly assembles into icosahedric core particles. The resulting nucleocapsid eventually associates with the cytoplasmic domain of the spike glycoprotein E2 at the cell membrane, leading to budding and formation of mature virions. In case of infection, new virions attach to target cells and after clathrin-mediated endocytosis their membrane fuses with the host endosomal membrane. This leads to the release of the nucleocapsid into the cytoplasm, followed by an uncoating event necessary for the genomic RNA to become accessible. The uncoating might be triggered by the interaction of capsid proteins with ribosomes. Binding of ribosomes would release the genomic RNA since the same region is genomic RNA-binding and ribosome-binding. Specifically inhibits interleukin-1 receptor-associated kinase 1/IRAK1-dependent signaling during viral entry, representing a means by which the alphaviruses may evade innate immune detection and activation prior to viral gene expression. Its function is as follows. Provides the signal sequence for the translocation of the precursor of protein E3/E2 to the host endoplasmic reticulum. Furin-cleaved E3 remains associated with spike glycoprotein E1 and mediates pH protection of the latter during the transport via the secretory pathway. After virion release from the host cell, the assembly protein E3 is gradually released in the extracellular space. Plays a role in viral attachment to target host cell, by binding to the cell receptor. Synthesized as a p62 precursor which is processed by furin at the cell membrane just before virion budding, giving rise to E2-E1 heterodimer. The p62-E1 heterodimer is stable, whereas E2-E1 is unstable and dissociate at low pH. p62 is processed at the last step, presumably to avoid E1 fusion activation before its final export to cell surface. E2 C-terminus contains a transitory transmembrane that would be disrupted by palmitoylation, resulting in reorientation of the C-terminal tail from lumenal to cytoplasmic side. This step is critical since E2 C-terminus is involved in budding by interacting with capsid proteins. This release of E2 C-terminus in cytoplasm occurs lately in protein export, and precludes premature assembly of particles at the endoplasmic reticulum membrane. In terms of biological role, acts as a viroporin that participates in virus glycoprotein processing and transport to the plasma membrane, cell permeabilization and budding of viral particles. Disrupts the calcium homeostasis of the cell, probably at the endoplasmic reticulum level. This leads to cytoplasmic calcium elevation. Because of its lipophilic properties, the 6K protein is postulated to influence the selection of lipids that interact with the transmembrane domains of the glycoproteins, which, in turn, affects the deformability of the bilayer required for the extreme curvature that occurs as budding proceeds. Present in low amount in virions, about 3% compared to viral glycoproteins. Functionally, class II viral fusion protein. Fusion activity is inactive as long as E1 is bound to E2 in mature virion. After virus attachment to target cell and endocytosis, acidification of the endosome induce dissociation of E1/E2 heterodimer and concomitant trimerization of the E1 subunits. This E1 trimer is fusion active, and promotes release of viral nucleocapsid in cytoplasm after endosome and viral membrane fusion. Efficient fusion requires the presence of cholesterol and sphingolipid in the target membrane. This is Structural polyprotein from Oncorhynchus mykiss (Rainbow trout).